Here is a 365-residue protein sequence, read N- to C-terminus: P2Y purinoceptor 4 (365 aa).

Topologically, residues 1 to 34 (MASTESSLLRSLGLSPGPGSSEVELDCWFDEDFK) are extracellular. Residues 35-61 (FILLPVSYAVVFVLGLGLNAPTLWLFI) form a helical membrane-spanning segment. Residues 62 to 72 (FRLRPWDATAT) are Cytoplasmic-facing. The helical transmembrane segment at 73 to 95 (YMFHLALSDTLYVLSLPTLIYYY) threads the bilayer. At 96–112 (AAHNHWPFGTEICKFVR) the chain is on the extracellular side. A disulfide bond links C108 and C185. The helical transmembrane segment at 113-131 (FLFYWNLYCSVLFLTCISV) threads the bilayer. The Cytoplasmic segment spans residues 132–154 (HRYLGICHPLRALRWGRPRLAGL). Residues 155–174 (LCLAVWLVVAGCLVPNLFFV) form a helical membrane-spanning segment. Over 175-196 (TTSNKGTTVLCHDTTRPEEFDH) the chain is Extracellular. A helical membrane pass occupies residues 197–222 (YVHFSSAVMGLLFGVPCLVTLVCYGL). Topologically, residues 223 to 246 (MARRLYQPLPGSAQSSSRLRSLRT) are cytoplasmic. A helical membrane pass occupies residues 247 to 269 (IAVVLTVFAVCFVPFHITRTIYY). The Extracellular portion of the chain corresponds to 270–287 (LARLLEADCRVLNIVNVV). A helical membrane pass occupies residues 288–309 (YKVTRPLASANSCLDPVLYLLT). The Cytoplasmic portion of the chain corresponds to 310–365 (GDKYRRQLRQLCGGGKPQPRTAASSLALVSLPEDSSCRWAATPQDSSCSTPRADRL). Phosphoserine occurs at positions 333 and 334.

Belongs to the G-protein coupled receptor 1 family. Phosphorylation of Ser-333 and Ser-334 is a key step in agonist-dependent desensitization and loss of surface P2RY4. This phosphorylation does not involve PKC, nor other calcium activated kinases. Pancreas.

It localises to the cell membrane. Functionally, receptor for UTP and UDP coupled to G-proteins that activate a phosphatidylinositol-calcium second messenger system. Not activated by ATP or ADP. The sequence is that of P2Y purinoceptor 4 (P2RY4) from Homo sapiens (Human).